The primary structure comprises 299 residues: Ribosomal protein L11 methyltransferase (299 aa).

S-adenosyl-L-methionine-binding residues include Thr150, Gly171, Asp193, and Asn234.

This sequence belongs to the methyltransferase superfamily. PrmA family.

It localises to the cytoplasm. The catalysed reaction is L-lysyl-[protein] + 3 S-adenosyl-L-methionine = N(6),N(6),N(6)-trimethyl-L-lysyl-[protein] + 3 S-adenosyl-L-homocysteine + 3 H(+). Functionally, methylates ribosomal protein L11. The chain is Ribosomal protein L11 methyltransferase from Dictyoglomus turgidum (strain DSM 6724 / Z-1310).